The sequence spans 605 residues: Acetyl-coenzyme A carboxylase carboxyl transferase subunits beta/alpha (605 aa).

The interval 1 to 269 is acetyl-coenzyme A carboxylase carboxyl transferase subunit beta; that stretch reads MFKGLFKKTK…QRAEFLLKHG (269 aa). Positions 40–306 constitute a CoA carboxyltransferase N-terminal domain; sequence LWEKCDSCKS…SRMLDGNDCS (267 aa). A carboxyltransferase region spans residues 40–570; sequence LWEKCDSCKS…KNNLLKTLDN (531 aa). Positions 44, 47, 63, and 66 each coordinate Zn(2+). The C4-type zinc finger occupies 44 to 66; sequence CDSCKSIIYAEDLKKNYHICHEC. The segment at 270–593 is acetyl-coenzyme A carboxylase carboxyl transferase subunit alpha; it reads FVDKVINRKE…YEKFRSIGRF (324 aa). In terms of domain architecture, CoA carboxyltransferase C-terminal spans 317–570; it reads ASAKSVEEIR…KNNLLKTLDN (254 aa).

It in the N-terminal section; belongs to the AccD/PCCB family. This sequence in the C-terminal section; belongs to the AccA family. Acetyl-CoA carboxylase is a heterotetramer composed of biotin carboxyl carrier protein (AccB), biotin carboxylase (AccC) and two subunits of ACCase subunit beta/alpha. Zn(2+) is required as a cofactor.

It localises to the cytoplasm. It carries out the reaction N(6)-carboxybiotinyl-L-lysyl-[protein] + acetyl-CoA = N(6)-biotinyl-L-lysyl-[protein] + malonyl-CoA. It functions in the pathway lipid metabolism; malonyl-CoA biosynthesis; malonyl-CoA from acetyl-CoA: step 1/1. In terms of biological role, component of the acetyl coenzyme A carboxylase (ACC) complex. Biotin carboxylase (BC) catalyzes the carboxylation of biotin on its carrier protein (BCCP) and then the CO(2) group is transferred by the transcarboxylase to acetyl-CoA to form malonyl-CoA. This Natranaerobius thermophilus (strain ATCC BAA-1301 / DSM 18059 / JW/NM-WN-LF) protein is Acetyl-coenzyme A carboxylase carboxyl transferase subunits beta/alpha (accD).